A 173-amino-acid chain; its full sequence is Orotate phosphoribosyltransferase (173 aa).

5-phospho-alpha-D-ribose 1-diphosphate-binding positions include arginine 87, lysine 88, lysine 91, and 113–121 (EDIATTGQS). Orotate-binding residues include threonine 117 and arginine 145.

This sequence belongs to the purine/pyrimidine phosphoribosyltransferase family. PyrE subfamily. As to quaternary structure, homodimer. Requires Mg(2+) as cofactor.

The catalysed reaction is orotidine 5'-phosphate + diphosphate = orotate + 5-phospho-alpha-D-ribose 1-diphosphate. Its pathway is pyrimidine metabolism; UMP biosynthesis via de novo pathway; UMP from orotate: step 1/2. Its function is as follows. Catalyzes the transfer of a ribosyl phosphate group from 5-phosphoribose 1-diphosphate to orotate, leading to the formation of orotidine monophosphate (OMP). This Natronomonas pharaonis (strain ATCC 35678 / DSM 2160 / CIP 103997 / JCM 8858 / NBRC 14720 / NCIMB 2260 / Gabara) (Halobacterium pharaonis) protein is Orotate phosphoribosyltransferase.